A 243-amino-acid polypeptide reads, in one-letter code: Tetraspanin-36 (243 aa).

The Cytoplasmic portion of the chain corresponds to 1-9; sequence MDCGIITSK. Residues 10–30 form a helical membrane-spanning segment; it reads TILLLLSLIFWAAGAALAYVG. Residues 31–49 lie on the Lumenal side of the membrane; it reads SYVIKSYNNFEDFMSDRHT. Residues 50–70 form a helical membrane-spanning segment; sequence LIPAAIIIGVAVVMFIIGFVG. Residues 71–84 are Cytoplasmic-facing; that stretch reads CCATLRESKVGLGL. Residues 85 to 105 traverse the membrane as a helical segment; sequence FLIIIMLIFAAEVTAFVFGII. Topologically, residues 106-208 are lumenal; the sequence is YRGRIRGDLE…QVLQDVLSYA (103 aa). N149, N163, and N174 each carry an N-linked (GlcNAc...) asparagine glycan. A helical transmembrane segment spans residues 209–229; sequence MLVILGFAIIKFFGMLSVCVI. The Cytoplasmic portion of the chain corresponds to 230-243; the sequence is TCKSKKNEYQPLYA.

The protein belongs to the tetraspanin (TM4SF) family. Post-translationally, N-glycosylated. As to expression, strongly expressed in melanophores and xanthophores. Also detected in eye, brain, heart, skin, fin, testis and ovary.

The protein localises to the golgi apparatus membrane. It is found in the endoplasmic reticulum membrane. Functionally, plays a role in migration and segregation of pigment cells (melanophores and xanthophores). Contributes to pigment stripe patterning in the epidermis. This is Tetraspanin-36 from Danio rerio (Zebrafish).